The sequence spans 274 residues: F-actin-capping protein subunit alpha (274 aa).

Belongs to the F-actin-capping protein alpha subunit family. As to quaternary structure, heterodimer of an alpha and a beta subunit.

It localises to the cytoplasm. Functionally, F-actin-capping proteins bind in a Ca(2+)-independent manner to the fast growing ends of actin filaments (barbed end) thereby blocking the exchange of subunits at these ends. Unlike other capping proteins (such as gelsolin and severin), these proteins do not sever actin filaments. The polypeptide is F-actin-capping protein subunit alpha (Chaetomium thermophilum (strain DSM 1495 / CBS 144.50 / IMI 039719) (Thermochaetoides thermophila)).